A 140-amino-acid polypeptide reads, in one-letter code: Large ribosomal subunit protein uL14 (140 aa).

The protein belongs to the universal ribosomal protein uL14 family.

The sequence is that of Large ribosomal subunit protein uL14 (RPL23) from Nicotiana tabacum (Common tobacco).